A 585-amino-acid polypeptide reads, in one-letter code: T-cell surface protein tactile (585 aa).

Residues Met1 to Gly21 form the signal peptide. Over Val22–Met519 the chain is Extracellular. Residues Gly38–Glu125 form the Ig-like V-type 1 domain. Residues Asn42, Asn97, Asn107, Asn148, Asn156, Asn166, Asn200, Asn215, Asn277, Asn278, Asn300, Asn350, and Asn368 are each glycosylated (N-linked (GlcNAc...) asparagine). A disulfide bridge connects residues Cys45 and Cys118. The 83-residue stretch at Asn156–Ile238 folds into the Ig-like V-type 2 domain. Cys163 and Cys247 are disulfide-bonded. An Ig-like C2-type domain is found at Pro269 to Thr375. Cys290 and Cys355 are oxidised to a cystine. Polar residues-rich tracts occupy residues Thr385–Thr418, Arg426–Thr452, and Arg460–Ser475. Residues Thr385 to Ser475 form a disordered region. An N-linked (GlcNAc...) asparagine glycan is attached at Asn435. An N-linked (GlcNAc...) asparagine glycan is attached at Asn497. A helical transmembrane segment spans residues Ser520 to Val540. At Arg541–Leu585 the chain is on the cytoplasmic side.

Homodimer; disulfide-linked. Interacts with PVR. As to expression, expressed on normal T-cell lines and clones, and some transformed T-cells, but no other cultured cell lines tested. It is expressed at very low levels on activated B-cells.

The protein localises to the membrane. May be involved in adhesive interactions of activated T and NK cells during the late phase of the immune response. Promotes NK cell-target adhesion by interacting with PVR present on target cells. May function at a time after T and NK cells have penetrated the endothelium using integrins and selectins, when they are actively engaging diseased cells and moving within areas of inflammation. The protein is T-cell surface protein tactile (CD96) of Homo sapiens (Human).